The following is a 176-amino-acid chain: Large ribosomal subunit protein uL16 (176 aa).

This sequence belongs to the universal ribosomal protein uL16 family.

The polypeptide is Large ribosomal subunit protein uL16 (Halorubrum lacusprofundi (strain ATCC 49239 / DSM 5036 / JCM 8891 / ACAM 34)).